Consider the following 281-residue polypeptide: Phosphonates import ATP-binding protein PhnC (281 aa).

Positions 2–245 (FELKDVTRRF…AVKEIYGTDK (244 aa)) constitute an ABC transporter domain. An ATP-binding site is contributed by 34–41 (GRSGAGKS).

This sequence belongs to the ABC transporter superfamily. Phosphonates importer (TC 3.A.1.9.1) family. The complex is composed of two ATP-binding proteins (PhnC), two transmembrane proteins (PhnE) and a solute-binding protein (PhnD).

It localises to the cell inner membrane. It catalyses the reaction phosphonate(out) + ATP + H2O = phosphonate(in) + ADP + phosphate + H(+). Part of the ABC transporter complex PhnCDE involved in phosphonates import. Responsible for energy coupling to the transport system. The chain is Phosphonates import ATP-binding protein PhnC from Rhizobium etli (strain ATCC 51251 / DSM 11541 / JCM 21823 / NBRC 15573 / CFN 42).